Consider the following 375-residue polypeptide: Carbamoyl phosphate synthase small chain (375 aa).

Residues 1 to 186 (MRALLALEDG…LEPGGCAWVG (186 aa)) are CPSase. Residues serine 45, glycine 238, and glycine 240 each coordinate L-glutamine. Positions 190–375 (RLVVYDFGIK…RNMVREAAGC (186 aa)) constitute a Glutamine amidotransferase type-1 domain. Catalysis depends on cysteine 265, which acts as the Nucleophile. The L-glutamine site is built by leucine 266, glutamine 269, asparagine 307, glycine 309, and phenylalanine 310. Catalysis depends on residues histidine 348 and glutamate 350.

This sequence belongs to the CarA family. In terms of assembly, composed of two chains; the small (or glutamine) chain promotes the hydrolysis of glutamine to ammonia, which is used by the large (or ammonia) chain to synthesize carbamoyl phosphate. Tetramer of heterodimers (alpha,beta)4.

It carries out the reaction hydrogencarbonate + L-glutamine + 2 ATP + H2O = carbamoyl phosphate + L-glutamate + 2 ADP + phosphate + 2 H(+). The enzyme catalyses L-glutamine + H2O = L-glutamate + NH4(+). It participates in amino-acid biosynthesis; L-arginine biosynthesis; carbamoyl phosphate from bicarbonate: step 1/1. It functions in the pathway pyrimidine metabolism; UMP biosynthesis via de novo pathway; (S)-dihydroorotate from bicarbonate: step 1/3. In terms of biological role, small subunit of the glutamine-dependent carbamoyl phosphate synthetase (CPSase). CPSase catalyzes the formation of carbamoyl phosphate from the ammonia moiety of glutamine, carbonate, and phosphate donated by ATP, constituting the first step of 2 biosynthetic pathways, one leading to arginine and/or urea and the other to pyrimidine nucleotides. The small subunit (glutamine amidotransferase) binds and cleaves glutamine to supply the large subunit with the substrate ammonia. In Nitratidesulfovibrio vulgaris (strain ATCC 29579 / DSM 644 / CCUG 34227 / NCIMB 8303 / VKM B-1760 / Hildenborough) (Desulfovibrio vulgaris), this protein is Carbamoyl phosphate synthase small chain.